A 258-amino-acid chain; its full sequence is MFKVRVIPCLDVKDGRVVKGVNFVNLRDAGDPVEAAIAYDAAGADELCFLDITATHENRGIMLDVVRRTAEACFMPVTVGGGVRTIDDIKTLLRSGADKVSINSAAVSRREFVKEAAEKFGEQCIVVAIDAKSVPRPGGGSRWEIFTHGGRKSTGIDAIEYAQEVVALGAGEILLTSMDRDGTRQGFDLPLTRAVADSVPVPVIASGGVGNLDHLVDGIQQGRATAVLAASIFHFGEFTIRQAKEHMVRQGLPMRLDP.

Residues D11 and D130 contribute to the active site.

It belongs to the HisA/HisF family. As to quaternary structure, heterodimer of HisH and HisF.

Its subcellular location is the cytoplasm. The catalysed reaction is 5-[(5-phospho-1-deoxy-D-ribulos-1-ylimino)methylamino]-1-(5-phospho-beta-D-ribosyl)imidazole-4-carboxamide + L-glutamine = D-erythro-1-(imidazol-4-yl)glycerol 3-phosphate + 5-amino-1-(5-phospho-beta-D-ribosyl)imidazole-4-carboxamide + L-glutamate + H(+). It functions in the pathway amino-acid biosynthesis; L-histidine biosynthesis; L-histidine from 5-phospho-alpha-D-ribose 1-diphosphate: step 5/9. Functionally, IGPS catalyzes the conversion of PRFAR and glutamine to IGP, AICAR and glutamate. The HisF subunit catalyzes the cyclization activity that produces IGP and AICAR from PRFAR using the ammonia provided by the HisH subunit. The protein is Imidazole glycerol phosphate synthase subunit HisF of Bradyrhizobium sp. (strain ORS 278).